The sequence spans 784 residues: Homeobox-leucine zipper protein ROC2 (784 aa).

The tract at residues A60–Q113 is disordered. Over residues R102–Q113 the composition is skewed to basic residues. Positions R104–H163 form a DNA-binding region, homeobox. Residues Q158–Y234 adopt a coiled-coil conformation. Residues S286 to S523 enclose the START domain.

The protein belongs to the HD-ZIP homeobox family. Class IV subfamily.

It localises to the nucleus. Functionally, probable transcription factor. The sequence is that of Homeobox-leucine zipper protein ROC2 (ROC2) from Oryza sativa subsp. japonica (Rice).